The following is a 628-amino-acid chain: Voltage-gated potassium channel KCNC4 (628 aa).

Disordered stretches follow at residues 1–24 (MISS…SKTC) and 62–88 (LAWL…GSSG). Residues 1–28 (MISSVCVSSYRGRKSGNKPPSKTCLKEE) form an inactivation gate region. Residues 1–230 (MISSVCVSSY…EDPYSSRAAR (230 aa)) lie on the Cytoplasmic side of the membrane. 4 positions are modified to phosphoserine: serine 8, serine 9, serine 15, and serine 21. The segment covering 77–88 (DGGGAGSSGSSG) has biased composition (gly residues). Zn(2+) contacts are provided by histidine 120, cysteine 126, cysteine 147, and cysteine 148. Residues 231–251 (VVAFASLFFILVSITTFCLET) form a helical membrane-spanning segment. 2 N-linked (GlcNAc...) asparagine glycosylation sites follow: asparagine 260 and asparagine 269. A helical membrane pass occupies residues 282 to 302 (EPILTYIEGVCVMWFTLEFLV). Topologically, residues 303 to 316 (RIVCCPDTLDFVKN) are cytoplasmic. The chain crosses the membrane as a helical span at residues 317–337 (LLNIIDFVAILPFYLEVGLSG). A helical; Voltage-sensor membrane pass occupies residues 349–368 (FLRVVRFVRILRIFKLTRHF). The Cytoplasmic portion of the chain corresponds to 369 to 384 (VGLRVLGHTLRASTNE). A helical membrane pass occupies residues 385–405 (FLLLIIFLALGVLIFATMIYY). Residues threonine 440, leucine 441, glycine 442, and tyrosine 443 each contribute to the K(+) site. A Selectivity filter motif is present at residues 440–445 (TLGYGD). A helical transmembrane segment spans residues 456-476 (VGALCALAGVLTIAMPVPVIV). Over 477 to 628 (NNFGMYYSLA…CVPVSHTCAL (152 aa)) the chain is Cytoplasmic. Residues 493 to 584 (PKKRKKHVPR…RRALRRSGTR (92 aa)) form a disordered region. Over residues 531-546 (AREEGVVERKRADSKQ) the composition is skewed to basic and acidic residues.

This sequence belongs to the potassium channel family. C (Shaw) (TC 1.A.1.2) subfamily. Kv3.4/KCNC4 sub-subfamily. As to quaternary structure, homotetramer. Heterotetramer of potassium channel proteins. Post-translationally, phosphorylation of serine residues in the inactivation gate inhibits rapid channel closure.

It is found in the membrane. It carries out the reaction K(+)(in) = K(+)(out). Its function is as follows. Voltage-gated potassium channel that opens in response to the voltage difference across the membrane, forming a potassium-selective channel through which potassium ions pass in accordance with their electrochemical gradient. The channel displays rapid activation and inactivation kinetics. The polypeptide is Voltage-gated potassium channel KCNC4 (Mus musculus (Mouse)).